A 289-amino-acid polypeptide reads, in one-letter code: Polyketide biosynthesis malonyl CoA-acyl carrier protein transacylase BaeC (289 aa).

Catalysis depends on residues Ser87 and His193.

It belongs to the FabD family.

The protein localises to the cytoplasm. It carries out the reaction holo-[ACP] + malonyl-CoA = malonyl-[ACP] + CoA. It functions in the pathway antibiotic biosynthesis; bacillaene biosynthesis. Involved in some intermediate steps for the synthesis of the antibiotic polyketide bacillaene which is involved in secondary metabolism. It catalyzes the transfer of the malonyl-CoA group to the acyl-carrier-protein AcpK (Mal-AcpK). The sequence is that of Polyketide biosynthesis malonyl CoA-acyl carrier protein transacylase BaeC (baeC) from Bacillus velezensis (strain DSM 23117 / BGSC 10A6 / LMG 26770 / FZB42) (Bacillus amyloliquefaciens subsp. plantarum).